Consider the following 1481-residue polypeptide: Cystic fibrosis transmembrane conductance regulator (1481 aa).

Topologically, residues 1–77 (MQRSPLEKAS…KLINALRRCF (77 aa)) are cytoplasmic. The chain crosses the membrane as a helical span at residues 78–98 (FWRFTFYGILLYLGEVTKAVQ). The ABC transmembrane type-1 1 domain maps to 81-365 (FTFYGILLYL…WAVQTWYDSL (285 aa)). The Extracellular portion of the chain corresponds to 99–122 (PLLLGRIIASYDPDNKTERSIAIY). Residues 123-146 (LGIGLCLLFIVRTLLLHPAIFGLH) traverse the membrane as a helical segment. The Cytoplasmic portion of the chain corresponds to 147 to 195 (HIGMQMRIAMFSLIYKKTLKLSSRVLDKISIGQLVSLLSNNLNKFDEGL). The helical transmembrane segment at 196-216 (ALAHFVWIAPLQVALLMGLIW) threads the bilayer. The Extracellular segment spans residues 217–222 (ELLQAS). Residues 223-243 (AFCGLGFLIVLALFQAGLGRM) traverse the membrane as a helical segment. The Cytoplasmic segment spans residues 244 to 298 (MMKYRDQRAGKINERLVITSEMIENIQSVKAYCWEEAMEKIIENLRQTELKLTRK). Residues 299–319 (AAYVRYFNSSAFFFSGFFVVF) traverse the membrane as a helical segment. Topologically, residues 320–339 (LSVLPYALIKGIVLRKIFTT) are extracellular. A helical transmembrane segment spans residues 340-358 (ISFCIVLRMAVTRQFPWAV). Residues 359–858 (QTWYDSLGAI…YLRYITLHKS (500 aa)) lie on the Cytoplasmic side of the membrane. Residues tryptophan 401, serine 434, 458-465 (GSTGAGKT), and glutamine 493 each bind ATP. The ABC transporter 1 domain maps to 423 to 646 (NGDDNLFFSN…RPDFSSKLMG (224 aa)). Residue cysteine 524 is the site of S-palmitoyl cysteine attachment. Serine 549 and serine 660 each carry phosphoserine. A disordered R region region spans residues 654-831 (SSERRNSILT…EEINEEDLKE (178 aa)). Serine 670 is subject to Phosphoserine; by PKA. Residue serine 686 is modified to Phosphoserine. A Glycyl lysine isopeptide (Lys-Gly) (interchain with G-Cter in ubiquitin) cross-link involves residue lysine 688. Serine 700 and serine 712 each carry phosphoserine. Phosphothreonine is present on threonine 717. Phosphoserine occurs at positions 737, 753, 768, 790, 795, and 813. The helical transmembrane segment at 859 to 879 (LIFVLIWCLVIFLAEVAASLV) threads the bilayer. Residues 859 to 1155 (LIFVLIWCLV…AVNSSIDVDS (297 aa)) enclose the ABC transmembrane type-1 2 domain. The Extracellular portion of the chain corresponds to 880 to 918 (VLWLLGNTPFQDKGNSTYSRNNSYAVIITNTSSYYVFYI). N-linked (GlcNAc...) asparagine glycans are attached at residues asparagine 894, asparagine 900, and asparagine 909. Residues 919–939 (YVGVADTLLALGFFRGLPLVH) form a discontinuously helical membrane-spanning segment. Over 940–990 (TLITVSKMLHHKMLHSVLQAPMSTLNTLKAGGILNRFSKDIAILDDLLPLT) the chain is Cytoplasmic. The helical transmembrane segment at 991–1011 (IFDFIQLLLIVIGAIAVVSVL) threads the bilayer. Topologically, residues 1012–1013 (QP) are extracellular. Residues 1014–1034 (YIFLATVPVIAAFILLRAYFL) form a helical membrane-spanning segment. Topologically, residues 1035–1095 (QTSQQLKQLE…TANWFLYLST (61 aa)) are cytoplasmic. Residues 1096-1116 (LRWFQMRIEMIFVIFFIAVTF) traverse the membrane as a helical segment. Residues 1117–1130 (ISILTTGEGEGTVG) lie on the Extracellular side of the membrane. Residues 1131–1151 (IILTLAMNIMSTLQWAVNSSI) form a helical membrane-spanning segment. Topologically, residues 1152-1481 (DVDSLMRSVS…TEEEVQETRL (330 aa)) are cytoplasmic. Residues 1211-1444 (MTIKDLTAKY…KSLFRQAISH (234 aa)) form the ABC transporter 2 domain. ATP contacts are provided by residues tyrosine 1220 and 1245-1252 (GRTGSGKS). The interaction with GORASP2 stretch occupies residues 1387–1481 (RALKQAFADC…TEEEVQETRL (95 aa)). A lipid anchor (S-palmitoyl cysteine) is attached at cysteine 1396. Residues serine 1445 and serine 1457 each carry the phosphoserine modification. The segment at 1453-1481 (HRNSSKYKSQPQIASLKEETEEEVQETRL) is disordered. Positions 1471-1481 (ETEEEVQETRL) are enriched in acidic residues. Positions 1479-1481 (TRL) match the PDZ-binding motif.

This sequence belongs to the ABC transporter superfamily. ABCC family. CFTR transporter (TC 3.A.1.202) subfamily. As to quaternary structure, monomer; does not require oligomerization for channel activity. May form oligomers in the membrane. Interacts with SLC26A3, SLC26A6 and NHERF1. Interacts with SHANK2. Interacts with MYO6. Interacts (via C-terminus) with GOPC (via PDZ domain); this promotes CFTR internalization and thereby decreases channel activity. Interacts with SLC4A7 through NHERF1. Found in a complex with MYO5B and RAB11A. Interacts with ANO1. Interacts with SLC26A8. Interacts with AHCYL1; the interaction increases CFTR activity. Interacts with CSE1L. The core-glycosylated form interacts with GORASP2 (via PDZ GRASP-type 1 domain) in respone to ER stress. Interacts with MARCHF2; the interaction leads to CFTR ubiqtuitination and degradation. Interacts with ADGRG2. In terms of processing, N-glycosylated. Post-translationally, phosphorylated; cAMP treatment promotes phosphorylation and activates the channel. Dephosphorylation decreases the ATPase activity (in vitro). Phosphorylation at PKA sites activates the channel. Phosphorylation at PKC sites enhances the response to phosphorylation by PKA. Phosphorylated by AMPK; this inhibits channel activity. Ubiquitinated, leading to its degradation in the lysosome. Deubiquitination by USP10 in early endosomes enhances its endocytic recycling to the cell membrane. Ubiquitinated by RNF185 during ER stress. Ubiquitinated by MARCHF2.

The protein resides in the apical cell membrane. Its subcellular location is the early endosome membrane. The protein localises to the cell membrane. It localises to the recycling endosome membrane. It is found in the endoplasmic reticulum membrane. The protein resides in the nucleus. It carries out the reaction ATP + H2O + closed Cl(-) channel = ADP + phosphate + open Cl(-) channel.. The enzyme catalyses chloride(in) = chloride(out). It catalyses the reaction hydrogencarbonate(in) = hydrogencarbonate(out). The catalysed reaction is ATP + H2O = ADP + phosphate + H(+). Epithelial ion channel that plays an important role in the regulation of epithelial ion and water transport and fluid homeostasis. Mediates the transport of chloride ions across the cell membrane. Possesses an intrinsic ATPase activity and utilizes ATP to gate its channel; the passive flow of anions through the channel is gated by cycles of ATP binding and hydrolysis by the ATP-binding domains. The ion channel is also permeable to HCO(3)(-); selectivity depends on the extracellular chloride concentration. Exerts its function also by modulating the activity of other ion channels and transporters. Contributes to the regulation of the pH and the ion content of the epithelial fluid layer. Modulates the activity of the epithelial sodium channel (ENaC) complex, in part by regulating the cell surface expression of the ENaC complex. May regulate bicarbonate secretion and salvage in epithelial cells by regulating the transporter SLC4A7. Can inhibit the chloride channel activity of ANO1. Plays a role in the chloride and bicarbonate homeostasis during sperm epididymal maturation and capacitation. This chain is Cystic fibrosis transmembrane conductance regulator, found in Aotus nancymaae (Ma's night monkey).